The sequence spans 414 residues: uncharacterized protein (414 aa).

Disordered regions lie at residues 136–168 (SSKSMTPTAEKQLEKPLENGSELQEGDSLTVPT), 297–333 (PQNFPNSGMQRAVQAPRPQNKMSYHRNNKNRNAENAS), and 346–414 (ALNA…NGSK). Polar residues predominate over residues 350-359 (PSRSRPTHGS). Over residues 399-414 (SKSEKIYPEPRRNGSK) the composition is skewed to basic and acidic residues.

This is an uncharacterized protein from Homo sapiens (Human).